Here is a 193-residue protein sequence, read N- to C-terminus: UPF0301 protein SCO2948 (193 aa).

The protein belongs to the UPF0301 (AlgH) family.

In Streptomyces coelicolor (strain ATCC BAA-471 / A3(2) / M145), this protein is UPF0301 protein SCO2948.